The chain runs to 325 residues: D site-binding protein (325 aa).

Disordered stretches follow at residues 1–100, 124–198, and 212–255; these read MARP…PGLL, LEHG…DPDT, and LALS…EQKD. Residues 17–28 are compositionally biased toward gly residues; sequence GPTGAPPGGGAL. Composition is skewed to low complexity over residues 29-38 and 71-80; these read LGLRSLLQGT and AGPADASAGA. The residue at position 86 (serine 86) is a Phosphoserine. Over residues 88–100 the composition is skewed to low complexity; that stretch reads RGRPGAAPGPGLL. The segment covering 129-153 has biased composition (pro residues); it reads PPSPPPPGGPSPAPSPVRTPAPSPR. Residues 166–176 are compositionally biased toward low complexity; it reads PGHAPARAALG. Positions 221 to 236 are enriched in basic and acidic residues; sequence ETFDPRRHRFSEEELK. The 64-residue stretch at 255 to 318 folds into the bZIP domain; the sequence is DEKYWSRRYK…SHYRAVLSRY (64 aa). The interval 257–279 is basic motif; the sequence is KYWSRRYKNNEAAKRSRDARRLK. Residues 283–297 form a leucine-zipper region; it reads ISVRAAFLEKENALL.

It belongs to the bZIP family. PAR subfamily. Binds DNA as a homodimer or a heterodimer. Can form a heterodimer with TEF.

Its subcellular location is the nucleus. Its function is as follows. This transcriptional activator recognizes and binds to the sequence 5'-RTTAYGTAAY-3' found in the promoter of genes such as albumin, CYP2A4 and CYP2A5. It is not essential for circadian rhythm generation, but modulates important clock output genes. May be a direct target for regulation by the circadian pacemaker component clock. May affect circadian period and sleep regulation. This is D site-binding protein (DBP) from Bos taurus (Bovine).